The following is a 220-amino-acid chain: Protein CREG1 (220 aa).

Residues 1–31 (MAARAPELARSLLAALLAPALVALLVSPASG) form the signal peptide. The disordered stretch occupies residues 30–53 (SGRGGRDHGDWDVDRRLPPLPPRE). Residues 33-53 (GGRDHGDWDVDRRLPPLPPRE) show a composition bias toward basic and acidic residues. Residues Asn160 and Asn216 are each glycosylated (N-linked (GlcNAc...) asparagine).

It belongs to the CREG family. As to quaternary structure, homodimer. Interacts with IGF2R; the interaction is dependent on glycosylation. N-glycosylated. Widely expressed.

It localises to the secreted. In terms of biological role, may contribute to the transcriptional control of cell growth and differentiation. Antagonizes transcriptional activation and cellular transformation by the adenovirus E1A protein. The transcriptional control activity of cell growth requires interaction with IGF2R. The chain is Protein CREG1 (Creg1) from Mus musculus (Mouse).